The sequence spans 164 residues: FMN reductase (NADH) RutF (164 aa).

The protein belongs to the non-flavoprotein flavin reductase family. RutF subfamily.

It carries out the reaction FMNH2 + NAD(+) = FMN + NADH + 2 H(+). Catalyzes the reduction of FMN to FMNH2 which is used to reduce pyrimidine by RutA via the Rut pathway. The chain is FMN reductase (NADH) RutF from Escherichia coli O127:H6 (strain E2348/69 / EPEC).